Consider the following 122-residue polypeptide: Small ribosomal subunit protein uS13c (122 aa).

It belongs to the universal ribosomal protein uS13 family. As to quaternary structure, part of the 30S ribosomal subunit.

It is found in the plastid. The protein localises to the chloroplast. In terms of biological role, located at the top of the head of the 30S subunit, it contacts several helices of the 16S rRNA. The sequence is that of Small ribosomal subunit protein uS13c from Cyanidium caldarium (Red alga).